Consider the following 141-residue polypeptide: Hemoglobin subunit alpha-D (141 aa).

The 141-residue stretch at Met-1 to Arg-141 folds into the Globin domain. Heme b is bound by residues His-58 and His-87.

The protein belongs to the globin family. In terms of assembly, heterotetramer of two alpha-D chains and two beta chains. As to expression, red blood cells.

Its function is as follows. Involved in oxygen transport from the lung to the various peripheral tissues. The sequence is that of Hemoglobin subunit alpha-D (HBAD) from Chloephaga melanoptera (Andean goose).